Consider the following 81-residue polypeptide: ATP synthase subunit c, chloroplastic (81 aa).

The next 2 membrane-spanning stretches (helical) occupy residues 7-27 and 57-77; these read AASVIAAGLAVGLASIGPGVG and LAFMEALTIYGLVVALALLFA.

It belongs to the ATPase C chain family. As to quaternary structure, F-type ATPases have 2 components, F(1) - the catalytic core - and F(0) - the membrane proton channel. F(1) has five subunits: alpha(3), beta(3), gamma(1), delta(1), epsilon(1). F(0) has four main subunits: a(1), b(1), b'(1) and c(10-14). The alpha and beta chains form an alternating ring which encloses part of the gamma chain. F(1) is attached to F(0) by a central stalk formed by the gamma and epsilon chains, while a peripheral stalk is formed by the delta, b and b' chains.

Its subcellular location is the plastid. It localises to the chloroplast thylakoid membrane. F(1)F(0) ATP synthase produces ATP from ADP in the presence of a proton or sodium gradient. F-type ATPases consist of two structural domains, F(1) containing the extramembraneous catalytic core and F(0) containing the membrane proton channel, linked together by a central stalk and a peripheral stalk. During catalysis, ATP synthesis in the catalytic domain of F(1) is coupled via a rotary mechanism of the central stalk subunits to proton translocation. Functionally, key component of the F(0) channel; it plays a direct role in translocation across the membrane. A homomeric c-ring of between 10-14 subunits forms the central stalk rotor element with the F(1) delta and epsilon subunits. This Arabis hirsuta (Hairy rock-cress) protein is ATP synthase subunit c, chloroplastic.